Here is a 99-residue protein sequence, read N- to C-terminus: Small ribosomal subunit protein cS23 (99 aa).

The protein belongs to the chloroplast-specific ribosomal protein cS23 family. As to quaternary structure, part of the 30S ribosomal subunit.

It localises to the plastid. The protein localises to the chloroplast. In terms of biological role, probably a ribosomal protein or a ribosome-associated protein. This Gracilaria tenuistipitata var. liui (Red alga) protein is Small ribosomal subunit protein cS23.